The following is a 382-amino-acid chain: uncharacterized protein (382 aa).

A run of 12 helical transmembrane segments spans residues 14-34, 45-65, 79-99, 102-122, 131-151, 157-177, 204-224, 235-255, 270-290, 291-311, 325-345, and 348-368; these read GLLL…LWLA, VVSS…GYVI, FIFA…SWLA, FVAG…LMCS, LLAA…LLVS, LMSV…PLLF, LGVN…GLMP, ASIG…QWPI, VQVF…AMAP, ALFI…AWAC, ALLL…AMLM, and FSDN…LLML.

The protein belongs to the major facilitator superfamily. YcaD (TC 2.A.1.26) family.

It localises to the cell inner membrane. This is an uncharacterized protein from Escherichia coli O7:K1 (strain IAI39 / ExPEC).